A 621-amino-acid chain; its full sequence is Chaperone protein HscA homolog (621 aa).

It belongs to the heat shock protein 70 family.

In terms of biological role, chaperone involved in the maturation of iron-sulfur cluster-containing proteins. Has a low intrinsic ATPase activity which is markedly stimulated by HscB. This is Chaperone protein HscA homolog from Ralstonia pickettii (strain 12J).